The primary structure comprises 220 residues: UPF0319 protein Asuc_1002 (220 aa).

Residues 1 to 21 (MKFRLAAVAAAALLASSASFA) form the signal peptide.

The protein belongs to the UPF0319 family.

The chain is UPF0319 protein Asuc_1002 from Actinobacillus succinogenes (strain ATCC 55618 / DSM 22257 / CCUG 43843 / 130Z).